Consider the following 203-residue polypeptide: 8-oxoguanine DNA glycosylase/AP lyase (203 aa).

Active-site residues include Lys128 and Asp146.

This sequence belongs to the type-2 OGG1 family.

It carries out the reaction 2'-deoxyribonucleotide-(2'-deoxyribose 5'-phosphate)-2'-deoxyribonucleotide-DNA = a 3'-end 2'-deoxyribonucleotide-(2,3-dehydro-2,3-deoxyribose 5'-phosphate)-DNA + a 5'-end 5'-phospho-2'-deoxyribonucleoside-DNA + H(+). Functionally, catalyzes the excision of an oxidatively damaged form of guanine (7,8-dihydro-8-oxoguanine = 8-oxoG) from DNA. Also cleaves the DNA backbone at apurinic/apyrimidinic sites (AP sites). The protein is 8-oxoguanine DNA glycosylase/AP lyase of Sulfolobus acidocaldarius (strain ATCC 33909 / DSM 639 / JCM 8929 / NBRC 15157 / NCIMB 11770).